We begin with the raw amino-acid sequence, 451 residues long: Glutamyl-tRNA reductase (451 aa).

Substrate is bound by residues 47 to 50 (TCNR), Ser-132, 137 to 139 (EPQ), and Gln-143. Residue Cys-48 is the Nucleophile of the active site. 212-217 (AAGEMN) serves as a coordination point for NADP(+).

This sequence belongs to the glutamyl-tRNA reductase family. As to quaternary structure, homodimer.

The catalysed reaction is (S)-4-amino-5-oxopentanoate + tRNA(Glu) + NADP(+) = L-glutamyl-tRNA(Glu) + NADPH + H(+). It participates in porphyrin-containing compound metabolism; protoporphyrin-IX biosynthesis; 5-aminolevulinate from L-glutamyl-tRNA(Glu): step 1/2. Functionally, catalyzes the NADPH-dependent reduction of glutamyl-tRNA(Glu) to glutamate 1-semialdehyde (GSA). The protein is Glutamyl-tRNA reductase of Psychrobacter sp. (strain PRwf-1).